We begin with the raw amino-acid sequence, 876 residues long: Exonuclease mut-7 homolog (876 aa).

In terms of domain architecture, 3'-5' exonuclease spans 517 to 571 (GLSLLVQQVLGTALDKTQQLSNWDRRPLCEEQVIYAAADAYCLLEVHQALCREPA). Disordered stretches follow at residues 578–607 (DLAG…APAA) and 751–781 (SHQE…AAPE).

The protein belongs to the mut-7 family. Mg(2+) serves as cofactor.

Its function is as follows. Possesses 3'-5' exoribonuclease activity. Required for 3'-end trimming of AGO1-bound miRNAs. The sequence is that of Exonuclease mut-7 homolog (EXD3) from Homo sapiens (Human).